Consider the following 144-residue polypeptide: Large ribosomal subunit protein uL13 (144 aa).

Belongs to the universal ribosomal protein uL13 family. In terms of assembly, part of the 50S ribosomal subunit.

Its function is as follows. This protein is one of the early assembly proteins of the 50S ribosomal subunit, although it is not seen to bind rRNA by itself. It is important during the early stages of 50S assembly. This Pelotomaculum thermopropionicum (strain DSM 13744 / JCM 10971 / SI) protein is Large ribosomal subunit protein uL13.